Consider the following 160-residue polypeptide: 2-C-methyl-D-erythritol 2,4-cyclodiphosphate synthase (160 aa).

Residues D11 and H13 each contribute to the a divalent metal cation site. 4-CDP-2-C-methyl-D-erythritol 2-phosphate-binding positions include 11–13 (DIH) and 37–38 (HS). An a divalent metal cation-binding site is contributed by H45. Residues 59–61 (DIG), 135–138 (TTNE), and R145 each bind 4-CDP-2-C-methyl-D-erythritol 2-phosphate.

This sequence belongs to the IspF family. As to quaternary structure, homotrimer. The cofactor is a divalent metal cation.

The catalysed reaction is 4-CDP-2-C-methyl-D-erythritol 2-phosphate = 2-C-methyl-D-erythritol 2,4-cyclic diphosphate + CMP. The protein operates within isoprenoid biosynthesis; isopentenyl diphosphate biosynthesis via DXP pathway; isopentenyl diphosphate from 1-deoxy-D-xylulose 5-phosphate: step 4/6. Involved in the biosynthesis of isopentenyl diphosphate (IPP) and dimethylallyl diphosphate (DMAPP), two major building blocks of isoprenoid compounds. Catalyzes the conversion of 4-diphosphocytidyl-2-C-methyl-D-erythritol 2-phosphate (CDP-ME2P) to 2-C-methyl-D-erythritol 2,4-cyclodiphosphate (ME-CPP) with a corresponding release of cytidine 5-monophosphate (CMP). The protein is 2-C-methyl-D-erythritol 2,4-cyclodiphosphate synthase of Synechococcus elongatus (strain ATCC 33912 / PCC 7942 / FACHB-805) (Anacystis nidulans R2).